A 500-amino-acid chain; its full sequence is Protein PIGMENT DEFECTIVE 338, chloroplastic (500 aa).

A chloroplast-targeting transit peptide spans 1–63 (MQTLLCQPCK…FAFRGFSICR (63 aa)). S1 motif domains are found at residues 156–265 (KPGD…LSSR), 283–351 (NEPI…LSEK), and 362–431 (GTLL…LSIA).

It belongs to the bacterial ribosomal protein bS1 family. Interacts with CRP1 and PRFB3. In terms of tissue distribution, present in leaves (at protein level). Confined to leaf chlorenchyma cells.

The protein localises to the plastid. Its subcellular location is the chloroplast. In terms of biological role, RNA-binding protein that acts as an RNA chaperone to remodel RNA structure and activates their translation. Required for seed pigmentation. Necessary for chloroplast development and subsequent photosynthetic electron flow, as well as for non-photochemical quenching (NPQ). Rubisco regulatory factor which regulates the concerted biogenesis of NDH, PSI (including PsaA, PsaB, PsaD, PsaF, PsaL, PsaG, PsaK and NdhH) and Cytb(6)f (including PetA, PetB, PetC and PetD) complexes. Binds specifically to and involved in the post-transcriptional regulation of plastid-encoded mRNAs (e.g. rbcL, petA, petB, petD and Ycf1), thus modulating expression, cellular localization/compartmentalization, and photosynthetic function. The chain is Protein PIGMENT DEFECTIVE 338, chloroplastic from Arabidopsis thaliana (Mouse-ear cress).